Here is a 370-residue protein sequence, read N- to C-terminus: 3-isopropylmalate dehydrogenase (370 aa).

77 to 90 (GPKWDAVPYDARPE) contributes to the NAD(+) binding site. Arginine 97, arginine 107, arginine 135, and aspartate 226 together coordinate substrate. Residues aspartate 226, aspartate 250, and aspartate 254 each contribute to the Mg(2+) site. 290-302 (GSAPDIAGKGLAN) contacts NAD(+).

Belongs to the isocitrate and isopropylmalate dehydrogenases family. LeuB type 1 subfamily. In terms of assembly, homodimer. Mg(2+) serves as cofactor. Requires Mn(2+) as cofactor.

The protein localises to the cytoplasm. It carries out the reaction (2R,3S)-3-isopropylmalate + NAD(+) = 4-methyl-2-oxopentanoate + CO2 + NADH. It participates in amino-acid biosynthesis; L-leucine biosynthesis; L-leucine from 3-methyl-2-oxobutanoate: step 3/4. Its function is as follows. Catalyzes the oxidation of 3-carboxy-2-hydroxy-4-methylpentanoate (3-isopropylmalate) to 3-carboxy-4-methyl-2-oxopentanoate. The product decarboxylates to 4-methyl-2 oxopentanoate. This is 3-isopropylmalate dehydrogenase from Rhodopseudomonas palustris (strain HaA2).